Consider the following 344-residue polypeptide: Transmembrane protein 268 (344 aa).

The interval 1–31 (MACEPQMDPGGAAGPLPTSSPGWSPLPGGSP) is disordered. The segment covering 14–27 (GPLPTSSPGWSPLP) has biased composition (low complexity). 2 consecutive transmembrane segments (helical) span residues 106–126 (AFAVVFYVVVWANIYSTSQMF) and 133–153 (AGVLLVTLAATSLTLTLVVIF). Positions 244-266 (TANEGPENLLEETPLLPDRPGST) are disordered. The segment covering 247 to 259 (EGPENLLEETPLL) has biased composition (low complexity).

Interacts with ITGAM; this interaction inhibits ITGAM degradation via the endosome-lysosome pathway. Interacts with ITGB4; this interaction prevents ITGB4 degradation.

The protein resides in the cell membrane. In terms of biological role, stabilizes cell surface expression of ITGAM and participates in the adhesion and migration of phagocytes during bacterial clearance. The protein is Transmembrane protein 268 (TMEM268) of Bos taurus (Bovine).